The primary structure comprises 434 residues: Epimerase FSL3 (434 aa).

125 to 126 (GF) serves as a coordination point for substrate. Glu-392 (proton acceptor) is an active-site residue.

This sequence belongs to the aldose epimerase family. In terms of assembly, monomer.

It participates in secondary metabolite biosynthesis. Functionally, epimerase; part of the gene cluster that mediates the biosynthesis of fusarielins F, G and H, decaketide compounds with 5 methylations and a decaline core that act as mycoestrogens as they stimulate growth of MCF-7 breast cancer cells. The initial compound in the pathway is produced by the reducing polyketide synthase FSL1. FSL1 lacks an active enoyl reductase (ER) domain and biosynthesis of fusarielins relies on the trans-acting enoyl reductase FSL5, before it is released through hydrolysis catalyzed by the thioesterase FSL2. Fusarielins F, G, and H have a C11=C12 cis double bond and is fully reduced between C10 and C11 and between C12 and C13. FSL3 can be involved in the formation of the C11=C12 cis double bond by moving a hypothetical C10=C11 or C12=C13 trans double bond to form prefusarielin. Prefusarielin is oxygenated at C15 and C16 by the cytochrome P450 monooxygenase FSL4, resulting in fusarielin F, which subsequently is epoxidized into fusarielin G by the same enzyme. The final step in the pathway is a reduction of the carboxylic acid moiety to yield fusarielin H via a still undetermined mechanism. This chain is Epimerase FSL3, found in Gibberella zeae (strain ATCC MYA-4620 / CBS 123657 / FGSC 9075 / NRRL 31084 / PH-1) (Wheat head blight fungus).